A 547-amino-acid polypeptide reads, in one-letter code: Calcium-dependent protein kinase 16 (547 aa).

Residues Met-1–Lys-53 form a disordered region. A lipid anchor (N-myristoyl glycine) is attached at Gly-2. The span at Asn-37 to Gly-49 shows a compositional bias: gly residues. Residues Tyr-73–Leu-331 enclose the Protein kinase domain. Residues Leu-79–Thr-87 and Lys-102 contribute to the ATP site. The Proton acceptor role is filled by Asp-197. An autoinhibitory domain region spans residues Ala-337–Ile-367. EF-hand domains are found at residues Glu-374–His-409, Leu-410–Met-445, Ala-446–Thr-481, and Asp-482–Trp-517. Ca(2+) contacts are provided by Asp-387, Asp-389, Asp-391, Glu-398, Asp-423, Asn-425, Glu-434, Asp-459, Asp-461, Asn-463, Tyr-465, Glu-470, Asp-495, Asp-497, Asp-499, Lys-501, and Glu-506.

This sequence belongs to the protein kinase superfamily. Ser/Thr protein kinase family. CDPK subfamily.

The protein resides in the membrane. It carries out the reaction L-seryl-[protein] + ATP = O-phospho-L-seryl-[protein] + ADP + H(+). The enzyme catalyses L-threonyl-[protein] + ATP = O-phospho-L-threonyl-[protein] + ADP + H(+). Its activity is regulated as follows. Activated by calcium. Autophosphorylation may play an important role in the regulation of the kinase activity. In terms of biological role, may play a role in signal transduction pathways that involve calcium as a second messenger. This is Calcium-dependent protein kinase 16 from Oryza sativa subsp. japonica (Rice).